The sequence spans 282 residues: Pantothenate synthetase (282 aa).

30-37 is a binding site for ATP; that stretch reads MGYLHEGH. His-37 functions as the Proton donor in the catalytic mechanism. Gln-61 is a binding site for (R)-pantoate. Gln-61 is a binding site for beta-alanine. An ATP-binding site is contributed by 147–150; sequence GEKD. (R)-pantoate is bound at residue Gln-153. ATP-binding positions include Ile-176 and 184 to 187; that span reads KSSR.

This sequence belongs to the pantothenate synthetase family. As to quaternary structure, homodimer.

It localises to the cytoplasm. The enzyme catalyses (R)-pantoate + beta-alanine + ATP = (R)-pantothenate + AMP + diphosphate + H(+). It participates in cofactor biosynthesis; (R)-pantothenate biosynthesis; (R)-pantothenate from (R)-pantoate and beta-alanine: step 1/1. Its function is as follows. Catalyzes the condensation of pantoate with beta-alanine in an ATP-dependent reaction via a pantoyl-adenylate intermediate. The protein is Pantothenate synthetase of Enterococcus faecalis (strain ATCC 700802 / V583).